A 78-amino-acid chain; its full sequence is Large ribosomal subunit protein bL28 (78 aa).

The segment at 1–20 is disordered; that stretch reads MSRVCQVTGKGPVTGNNISH.

Belongs to the bacterial ribosomal protein bL28 family.

This chain is Large ribosomal subunit protein bL28, found in Pseudomonas fluorescens (strain ATCC BAA-477 / NRRL B-23932 / Pf-5).